The sequence spans 505 residues: Catalase (505 aa).

Catalysis depends on residues His58 and Asn131. Tyr341 lines the heme pocket.

Belongs to the catalase family. It depends on heme as a cofactor.

The catalysed reaction is 2 H2O2 = O2 + 2 H2O. Decomposes hydrogen peroxide into water and oxygen; serves to protect cells from the toxic effects of hydrogen peroxide. In Methanosarcina barkeri (strain Fusaro / DSM 804), this protein is Catalase (kat).